The primary structure comprises 121 residues: Small ribosomal subunit protein uS13 (121 aa).

Residues 94-121 form a disordered region; sequence GLPLRGQRTRTNARTRKGPRRAAQALKK.

It belongs to the universal ribosomal protein uS13 family. In terms of assembly, part of the 30S ribosomal subunit. Forms a loose heterodimer with protein S19. Forms two bridges to the 50S subunit in the 70S ribosome.

Its function is as follows. Located at the top of the head of the 30S subunit, it contacts several helices of the 16S rRNA. In the 70S ribosome it contacts the 23S rRNA (bridge B1a) and protein L5 of the 50S subunit (bridge B1b), connecting the 2 subunits; these bridges are implicated in subunit movement. Contacts the tRNAs in the A and P-sites. The protein is Small ribosomal subunit protein uS13 of Burkholderia mallei (strain NCTC 10247).